Here is a 173-residue protein sequence, read N- to C-terminus: Probable transcription termination protein NusA (173 aa).

In terms of domain architecture, KH spans 31–97 (DEKIVFVVKE…EDVWVKKFGN (67 aa)). The span at 147-162 (ADNRPKKDEIPEKAAE) shows a compositional bias: basic and acidic residues. The disordered stretch occupies residues 147–173 (ADNRPKKDEIPEKAAESSENVQAEENQ). Over residues 163–173 (SSENVQAEENQ) the composition is skewed to polar residues.

Belongs to the NusA family.

The protein resides in the cytoplasm. In terms of biological role, participates in transcription termination. The protein is Probable transcription termination protein NusA of Methanococcus vannielii (strain ATCC 35089 / DSM 1224 / JCM 13029 / OCM 148 / SB).